Consider the following 226-residue polypeptide: ATP synthase subunit a (226 aa).

5 consecutive transmembrane segments (helical) span residues 17-37 (FLFV…AKLA), 78-98 (LVAT…IPGF), 104-124 (NINF…FEGI), 175-195 (LFVW…GFAL), and 201-221 (FLQT…AVLL).

The protein belongs to the ATPase A chain family. F-type ATPases have 2 components, CF(1) - the catalytic core - and CF(0) - the membrane proton channel. CF(1) has five subunits: alpha(3), beta(3), gamma(1), delta(1), epsilon(1). CF(0) has three main subunits: a(1), b(2) and c(9-12). The alpha and beta chains form an alternating ring which encloses part of the gamma chain. CF(1) is attached to CF(0) by a central stalk formed by the gamma and epsilon chains, while a peripheral stalk is formed by the delta and b chains.

Its subcellular location is the cell inner membrane. Key component of the proton channel; it plays a direct role in the translocation of protons across the membrane. This chain is ATP synthase subunit a, found in Nitratiruptor sp. (strain SB155-2).